The following is a 499-amino-acid chain: Endoglucanase (499 aa).

Residues 1-29 (MKRSISIFITCLLIAVLTMGGLLPSPASA) form the signal peptide. Substrate is bound by residues histidine 65, 69–70 (WY), tyrosine 96, and histidine 131. The Proton donor role is filled by glutamate 169. Tyrosine 231 is a binding site for substrate. The active-site Nucleophile is glutamate 257. Substrate-binding positions include 263 to 264 (AS), tryptophan 291, and 296 to 298 (KQE). Basic and acidic residues predominate over residues 330-340 (RGTKDSTKDVP). The tract at residues 330 to 353 (RGTKDSTKDVPETPAQDNPTQEKG) is disordered. One can recognise a CBM3 domain in the interval 350-499 (QEKGVSVQYK…GKLIWGTEPN (150 aa)).

The protein belongs to the glycosyl hydrolase 5 (cellulase A) family.

The enzyme catalyses Endohydrolysis of (1-&gt;4)-beta-D-glucosidic linkages in cellulose, lichenin and cereal beta-D-glucans.. This Bacillus subtilis protein is Endoglucanase (bglC).